An 866-amino-acid polypeptide reads, in one-letter code: Leucine--tRNA ligase (866 aa).

The short motif at 59-69 is the 'HIGH' region element; that stretch reads PYPSGDLHMGH. A disordered region spans residues 393–421; sequence VPVIKTDPQTGEPLLPESAPLESPAETGQ. Positions 404-418 are enriched in low complexity; the sequence is EPLLPESAPLESPAE. The 'KMSKS' region signature appears at 628 to 632; the sequence is AMSKS. Lysine 631 lines the ATP pocket.

This sequence belongs to the class-I aminoacyl-tRNA synthetase family.

It localises to the cytoplasm. It catalyses the reaction tRNA(Leu) + L-leucine + ATP = L-leucyl-tRNA(Leu) + AMP + diphosphate. This is Leucine--tRNA ligase from Leifsonia xyli subsp. xyli (strain CTCB07).